Reading from the N-terminus, the 128-residue chain is Probable 4-amino-4-deoxy-L-arabinose-phosphoundecaprenol flippase subunit ArnF (128 aa).

Topologically, residues 1–2 are cytoplasmic; the sequence is MG. A helical membrane pass occupies residues 3-23; it reads LMWGLFSVIIASVAQLSLGFA. The Periplasmic portion of the chain corresponds to 24-35; it reads ASHLPPMTHLWD. A helical membrane pass occupies residues 36-56; the sequence is FIATLLAFGLDARILLLGLLG. Residues 57–77 lie on the Cytoplasmic side of the membrane; the sequence is YLLSVFCWYKTLHKLALSKAY. Residues 78–98 traverse the membrane as a helical segment; sequence ALLSMSYVLVWIASMVLPGWG. Residues 99–100 are Periplasmic-facing; the sequence is GT. The helical transmembrane segment at 101–121 threads the bilayer; sequence FSLKALLGVACIMSGLMLIFL. Over 122-128 the chain is Cytoplasmic; it reads PTTKQRY.

This sequence belongs to the ArnF family. In terms of assembly, heterodimer of ArnE and ArnF.

It localises to the cell inner membrane. The protein operates within bacterial outer membrane biogenesis; lipopolysaccharide biosynthesis. Functionally, translocates 4-amino-4-deoxy-L-arabinose-phosphoundecaprenol (alpha-L-Ara4N-phosphoundecaprenol) from the cytoplasmic to the periplasmic side of the inner membrane. In Shigella dysenteriae serotype 1 (strain Sd197), this protein is Probable 4-amino-4-deoxy-L-arabinose-phosphoundecaprenol flippase subunit ArnF.